The sequence spans 249 residues: tRNA (guanine-N(7)-)-methyltransferase (249 aa).

The interval 1-24 (MHSIPADTGHTPSRAPAGNGSPPA) is disordered. Glutamate 81, glutamate 106, aspartate 133, and aspartate 156 together coordinate S-adenosyl-L-methionine. Aspartate 156 is an active-site residue. Residue lysine 160 coordinates substrate. The segment at 162–167 (RHNKRR) is interaction with RNA. Substrate is bound by residues aspartate 192 and 227–230 (TKFE).

This sequence belongs to the class I-like SAM-binding methyltransferase superfamily. TrmB family.

The enzyme catalyses guanosine(46) in tRNA + S-adenosyl-L-methionine = N(7)-methylguanosine(46) in tRNA + S-adenosyl-L-homocysteine. It participates in tRNA modification; N(7)-methylguanine-tRNA biosynthesis. Its function is as follows. Catalyzes the formation of N(7)-methylguanine at position 46 (m7G46) in tRNA. This is tRNA (guanine-N(7)-)-methyltransferase from Paracidovorax citrulli (strain AAC00-1) (Acidovorax citrulli).